The following is a 687-amino-acid chain: Ataxin-1-like (687 aa).

The segment covering 1-19 has biased composition (basic and acidic residues); the sequence is MKPVHERSQECLPPKKRDL. Disordered stretches follow at residues 1–46, 185–223, and 261–294; these read MKPV…SEWS, ATPPPQAASPAQSFNKSSSATSPPGQLPHHSNTQPLDLA, and SALEAAAANGQRQRERNVRRESEALDSASSKGES. The interval 20 to 197 is interaction with NCOR2 and ATXN1; that stretch reads PVTSEDMGRT…PPQAASPAQS (178 aa). A self-association region spans residues 20-197; the sequence is PVTSEDMGRT…PPQAASPAQS (178 aa). Composition is skewed to polar residues over residues 28–43 and 198–219; these read RTTSCSTNHTPSSDAS and FNKSSSATSPPGQLPHHSNTQP. Positions 272–283 are enriched in basic and acidic residues; sequence RQRERNVRRESE. A Phosphoserine modification is found at Ser-282. Thr-328 carries the phosphothreonine modification. The tract at residues 356–379 is disordered; sequence DEPSPLNLSHHNLDHQGEGRGSAR. At Ser-359 the chain carries Phosphoserine. One can recognise an AXH domain in the interval 455-586; sequence PPPVTSSHLP…SISLQSLNSN (132 aa). Residues 587–649 are disordered; the sequence is SVSQASCAPP…PGAQACWPAP (63 aa).

The protein belongs to the ATXN1 family. Homodimer. Interacts (via AXH domain) with NCOR2. Interacts with ATXN1 and CIC. Directly interacts with RBPJ; this interaction is disrupted in the presence of Notch intracellular domain. Competes with ATXN1 for RBPJ-binding. Found in a complex with CIC and ATXN1. As to expression, expressed in the cortex and hypothalamus (at protein level). Expressed in neuronal cells. Highly expressed in Purkinje cells of cerebellum.

The protein resides in the nucleus. It is found in the cell projection. It localises to the dendrite. In terms of biological role, chromatin-binding factor that repress Notch signaling in the absence of Notch intracellular domain by acting as a CBF1 corepressor. Binds to the HEY promoter and might assist, along with NCOR2, RBPJ-mediated repression. Can suppress the cytotoxicity of ATXN1 in spinocerebellar ataxia type 1 (SCA1). In concert with CIC and ATXN1, involved in brain development. This is Ataxin-1-like (Atxn1l) from Mus musculus (Mouse).